Here is a 719-residue protein sequence, read N- to C-terminus: Polyribonucleotide nucleotidyltransferase (719 aa).

Mg(2+) contacts are provided by D490 and D496. In terms of domain architecture, KH spans 557 to 619; the sequence is PKIEIIIIPK…KSIDAALTRI (63 aa). Residues 629–699 enclose the S1 motif domain; the sequence is GEIYEGKIRS…KTGKFKLSHK (71 aa).

It belongs to the polyribonucleotide nucleotidyltransferase family. The cofactor is Mg(2+).

Its subcellular location is the cytoplasm. The catalysed reaction is RNA(n+1) + phosphate = RNA(n) + a ribonucleoside 5'-diphosphate. Its function is as follows. Involved in mRNA degradation. Catalyzes the phosphorolysis of single-stranded polyribonucleotides processively in the 3'- to 5'-direction. The protein is Polyribonucleotide nucleotidyltransferase of Azobacteroides pseudotrichonymphae genomovar. CFP2.